The primary structure comprises 784 residues: Serine/threonine-protein kinase DCLK2 (784 aa).

The segment at 1–45 is disordered; that stretch reads MASTRSIELEHFEERDKRPRPGSRRGAPSSSGGSSSSGPKGNGLI. Residues 7 to 19 are compositionally biased toward basic and acidic residues; sequence IELEHFEERDKRP. Positions 24-39 are enriched in low complexity; it reads RRGAPSSSGGSSSSGP. The residue at position 61 (Thr61) is a Phosphothreonine. Doublecortin domains are found at residues 72–158 and 197–280; these read KKAR…VDYT and KLVT…AQDD. Composition is skewed to low complexity over residues 300–312 and 341–364; these read AVKY…PGPS and TPSS…SPGS. The interval 300–368 is disordered; it reads AVKYSGSKSP…PTSPGSFRGL (69 aa). Ser379 carries the phosphoserine modification. Positions 411–668 constitute a Protein kinase domain; it reads YKIGKVIGDG…AGEILSHPWV (258 aa). ATP contacts are provided by residues 417-425 and Lys440; that span reads IGDGNFAVV. The active-site Proton acceptor is Asp532. Position 664 is a phosphoserine (Ser664). Position 683 is a phosphothreonine (Thr683). A disordered region spans residues 724–784; the sequence is CQDSSRPGME…RAGTWRRHRD (61 aa). Low complexity predominate over residues 741–758; the sequence is SASAEEPPVSAPAAAPAP.

Belongs to the protein kinase superfamily. CAMK Ser/Thr protein kinase family. CaMK subfamily. In terms of assembly, binds to and stabilizes microtubules. Interacts with MAPK8IP1/JIP-1, MAPK8IP2/JIP-2, MAPK9/JNK2, PPP1R9B/NEURABIN-2 and actin. In terms of processing, autophosphorylated.

The protein resides in the cytoplasm. It localises to the cytoskeleton. The enzyme catalyses L-seryl-[protein] + ATP = O-phospho-L-seryl-[protein] + ADP + H(+). It catalyses the reaction L-threonyl-[protein] + ATP = O-phospho-L-threonyl-[protein] + ADP + H(+). In terms of biological role, protein kinase with a significantly reduced Ca(2+)/CAM affinity and dependence compared to other members of the CaMK family. May play a role in the down-regulation of CRE-dependent gene activation probably by phosphorylation of the CREB coactivator CRTC2/TORC2 and the resulting retention of TORC2 in the cytoplasm. This Ailuropoda melanoleuca (Giant panda) protein is Serine/threonine-protein kinase DCLK2 (DCLK2).